Consider the following 471-residue polypeptide: O-acetyltransferase astG (471 aa).

Belongs to the fumigaclavine B O-acetyltransferase family. As to quaternary structure, monomer.

It carries out the reaction dideacetyl astellolide A + acetyl-CoA = 14-deacetyl astellolide A + CoA. The catalysed reaction is dideacetyl astellolide B + acetyl-CoA = 14-deacetyl astellolide B + CoA. It functions in the pathway secondary metabolite biosynthesis; terpenoid biosynthesis. Functionally, O-acetyltransferase; part of the gene cluster that mediates the biosynthesis of astellolides, drimane-type sesquiterpene esters that show antimicrobial, anti-inflammatory, and anti-tumor activities. The first step in astellolide biosynthesis is performed by the sesquiterpene cyclase astC that catalyzes the formation of drimanyl pyrophosphate from farnesyl pyrophosphate. Drimanyl pyrophosphate is then dephosphorylated by the sesquiterpene phosphatase astI to produce drimanyl monophosphate which is further dephosphorylated to drim-8-ene-11-ol by atsK. Drim-8-ene-11-ol is converted to confertifolin, probably by the cytochrome P450 monooxygenase astD and/or the dehydrogenase astE. The cytochrome P450 monooxygenases astB, astF and astJ then hydroxylate confertifolin at C6, C14, or C15 to form trihydroxy confertifolin. The nonribosomal peptide synthetase astA catalyzes ester bond formation between trihydroxy contifolin and benzoic acid (BA) or 4-hydroxy benzoic acid (4HBA), leading to the formation of dideacetyl astellolides A and B, respectively. Finally, the O-acetyltransferase astG converts dideacetyl astellolides A and B into deacetyl astellolides A and B. This is O-acetyltransferase astG from Aspergillus oryzae (strain ATCC 42149 / RIB 40) (Yellow koji mold).